We begin with the raw amino-acid sequence, 191 residues long: Protein UL140 (191 aa).

The helical transmembrane segment at threonine 28–tryptophan 48 threads the bilayer.

It is found in the host membrane. In Homo sapiens (Human), this protein is Protein UL140 (UL140).